Reading from the N-terminus, the 296-residue chain is Tyrosine recombinase XerC (296 aa).

A Core-binding (CB) domain is found at 1-84; it reads MDKIQETFLY…TLRTFYEFWM (84 aa). Residues 105–286 enclose the Tyr recombinase domain; it reads YLPQFFYEEE…SNQQLRKVYL (182 aa). Active-site residues include arginine 145, lysine 169, histidine 238, arginine 241, and histidine 264. The O-(3'-phospho-DNA)-tyrosine intermediate role is filled by tyrosine 273.

This sequence belongs to the 'phage' integrase family. XerC subfamily. In terms of assembly, forms a cyclic heterotetrameric complex composed of two molecules of XerC and two molecules of XerD.

The protein localises to the cytoplasm. Its function is as follows. Site-specific tyrosine recombinase, which acts by catalyzing the cutting and rejoining of the recombining DNA molecules. The XerC-XerD complex is essential to convert dimers of the bacterial chromosome into monomers to permit their segregation at cell division. It also contributes to the segregational stability of plasmids. This chain is Tyrosine recombinase XerC, found in Staphylococcus epidermidis (strain ATCC 35984 / DSM 28319 / BCRC 17069 / CCUG 31568 / BM 3577 / RP62A).